Reading from the N-terminus, the 242-residue chain is DNA repair protein RecO (242 aa).

It belongs to the RecO family. As to quaternary structure, monomer.

In terms of biological role, involved in DNA repair and RecF pathway recombination. In Salmonella schwarzengrund (strain CVM19633), this protein is DNA repair protein RecO.